The primary structure comprises 553 residues: Flagellar hook-associated protein 1 (553 aa).

Belongs to the flagella basal body rod proteins family.

The protein resides in the secreted. The protein localises to the bacterial flagellum. The polypeptide is Flagellar hook-associated protein 1 (flgK) (Salmonella typhi).